A 195-amino-acid chain; its full sequence is Mannitol operon repressor (195 aa).

The protein belongs to the MtlR/FumE family. As to quaternary structure, homodimer. Can also form higher level multimer aggregates.

In terms of biological role, involved in the repression of the expression of the mannitol mtlADR operon. Does not bind the operator/promoter regulatory region of this operon. Therefore, seems to belong to a new class of transcription factors in bacteria that may regulate gene expression indirectly, perhaps as a part of a larger transcriptional complex. The protein is Mannitol operon repressor of Escherichia coli O6:H1 (strain CFT073 / ATCC 700928 / UPEC).